The chain runs to 3987 residues: Hybrid PKS-NRPS synthetase buaA (3987 aa).

Residues 5 to 438 enclose the Ketosynthase family 3 (KS3) domain; that stretch reads NEPIAIVGSG…GANAHAIVES (434 aa). Catalysis depends on for beta-ketoacyl synthase activity residues Cys-176, His-315, and His-358. Positions 546-872 are malonyl-CoA:ACP transacylase (MAT) domain; sequence VFTGQGAQWP…RNADDVESFS (327 aa). Residues 939–1072 are N-terminal hotdog fold; sequence HELLGVRVDS…GAVRLQLGAA (134 aa). A PKS/mFAS DH domain is found at 939-1240; it reads HELLGVRVDS…VAPLVPVTQS (302 aa). The segment at 940-1238 is dehydratase (DH) domain; it reads ELLGVRVDSL…LQVAPLVPVT (299 aa). Catalysis depends on His-970, which acts as the Proton acceptor; for dehydratase activity. The tract at residues 1087-1240 is C-terminal hotdog fold; sequence MNDVNIEHFY…VAPLVPVTQS (154 aa). Asp-1147 serves as the catalytic Proton donor; for dehydratase activity. A methyltransferase (MT) domain region spans residues 1399 to 1583; sequence YLANLVKQLS…TSTPSHDVFM (185 aa). Residues 2113-2285 form a ketoreductase (KR) domain region; that stretch reads TYLLVGLTGE…LPGSVMNLAG (173 aa). The Carrier 1 domain occupies 2397–2473; the sequence is RVLTNGLILT…AMVEDTMERM (77 aa). The residue at position 2433 (Ser-2433) is an O-(pantetheine 4'-phosphoryl)serine. The interval 2489–2561 is disordered; the sequence is AADRPSAPSD…PPPSSVMSED (73 aa). Over residues 2514 to 2525 the composition is skewed to basic and acidic residues; that stretch reads HNSEEQESHAME. Residues 2532–2550 are compositionally biased toward low complexity; the sequence is STTSGGECSSTKESSSSEA. A condensation (C) domain region spans residues 2582 to 3001; that stretch reads MGYGSLQFFF…QLVKMCAYME (420 aa). An adenylation (A) (KR) domain region spans residues 3042-3448; the sequence is LDVAQARPEA…GQLYYEGRIA (407 aa). A Carrier 2 domain is found at 3564–3644; that stretch reads ADLSETELAL…AMALKIRNSQ (81 aa). Position 3604 is an O-(pantetheine 4'-phosphoryl)serine (Ser-3604). Residues 3680 to 3916 are reductase (R) domain; that stretch reads TVVLTGATGY…TGIAAAAVGA (237 aa).

It in the C-terminal section; belongs to the NRP synthetase family.

Its pathway is mycotoxin biosynthesis. Hybrid PKS-NRPS synthetase; part of the gene cluster that mediates the biosynthesis of burnettramic acids, an unusual class of bolaamphiphilic pyrrolizidinediones that display potent antibacterial, antifungal, and cytotoxic activities. The first step of the biosynthesis of burnettramic acids is the hydroxylation of proline by the proline hydroxylase buaE to generate 4-hydroxyproline. The PKS-NRPS buaA and trans-enoyl reductase buaC construct the highly reduced polyketide chain, and the condensation (C) domain of buaA then catalyzes the amide bond formation with the activated 4-hydroxyproline. This is followed by the R domain releasing the nascent polyketide-peptide directly via a Dieckmann condensation to afford a tetramic acid fused to the hydroxyproline, generating the bicyclic pyrrolidinedione moiety. The cytochrome P450 monooxygenases buaD and buaG are likely responsible for the multiple hydroxylations on the polyketide chain and its terminus, although in a heterologous context, buaD does not appear to be required. Therefore, while buaG may be a multifunctional cytochrome P450 monooxygenase, it cannot be ruled out that the two secondary alcohols on the polyketide chain could have an acetate origin. Finally, the glycosyltransferase buaB transfers beta-D-mannose to the aglycone burnettramic acid A to form burnettramic acid A. Burnettramic acid B is a minor cis-pyrrolizidine epimer of burnettramic acid A and it is likely that small amounts of it form naturally in acidic environments. The polypeptide is Hybrid PKS-NRPS synthetase buaA (Petromyces alliaceus (Aspergillus alliaceus)).